Here is a 113-residue protein sequence, read N- to C-terminus: uncharacterized protein (113 aa).

The disordered stretch occupies residues 28-55; that stretch reads CDGGPRRPLSRRGEEARRARAPSYEEQE.

This is an uncharacterized protein from Human cytomegalovirus (strain AD169) (HHV-5).